The sequence spans 408 residues: MPLSVGQGYFTSSISSEKFNAIKESARLPELSLWEKIKAYFFTTHHAEALECIFNLYHHQELNLTPVQVRGAYIKLRALASQGCKEQFIIESQEHADKLIIKDDNGENILSIEVECHPEAFGLAKEINKSHPKPKNISLGDITRLVFFGDSLSDSLGRMFEKTHHILPSYGQYFGGRFTNGFTWTEFLSSPHFLGKEMLNFAEGGSTSASYSCFNCIGDFVSNTDRQVASYTPSHQDLAIFLLGANDYMTLHKDNVIMVVEQQIDDIEKIISGGVNNVLVMGIPDLSLTPYGKHSDEKRKLKDESIAHNALLKTNVEELKEKYPQHKICYYETADAFKVIMEAASNIGYDTENPYTHHGYVHVPGAKDPQLDICPQYVFNDLVHPTQEVHHCFAIMLESFIAHHYSTE.

Serine 151 acts as the Nucleophile in catalysis. Active-site residues include aspartate 381 and histidine 384.

The protein belongs to the 'GDSL' lipolytic enzyme family. In terms of assembly, interacts with RhoA and indirectly with SifA.

The protein resides in the secreted. It is found in the host cytoplasm. Its function is as follows. Effector proteins function to alter host cell physiology and promote bacterial survival in host tissues. This protein is required for endosomal tubulation and negatively regulates the formation of Salmonella-induced filaments (Sifs) in epithelial cells. Has both deacylase and esterification activities in vitro, but esterification is probably the dominant activity in host cells. Significantly contributes to cholesterol esterification, which reduces cellular cholesterol in cells and abrogates the ability of SifA to associate with cholesterol and LAMP-1 vesicles. The polypeptide is Secreted effector protein SseJ (sseJ) (Salmonella typhimurium (strain LT2 / SGSC1412 / ATCC 700720)).